We begin with the raw amino-acid sequence, 256 residues long: E3 ubiquitin-protein ligase MIR2 (256 aa).

Residues 1–83 (MASKDVEEGV…NLWPEMERQE (83 aa)) are Cytoplasmic-facing. An RING-CH-type zinc finger spans residues 7–66 (EEGVEGPICWICREEVGNEGIHPCACTGELDVVHPQCLSTWLTVSRNTACQMCRVIYRTR). 8 residues coordinate Zn(2+): Cys15, Cys18, Cys30, Cys32, His40, Cys43, Cys56, and Cys59. Residues 84–104 (IFELFLLMSVVVAGLVGVALC) traverse the membrane as a helical segment. Residues 105-124 (TWTLLVILTAPAGTFSPGAV) lie on the Extracellular side of the membrane. Residues 125–145 (LGFLCFFGFYQIFIVFAFGGI) form a helical membrane-spanning segment. Over 146 to 256 (CRVSGTVRAL…VRKNHPKNNG (111 aa)) the chain is Cytoplasmic. Residues 179–256 (DNIELTVLVG…VRKNHPKNNG (78 aa)) are disordered. A compositionally biased stretch (acidic residues) spans 193–203 (TDEEPTDESSE). Positions 245–256 (KPVRKNHPKNNG) are enriched in basic residues.

In terms of assembly, binds human MHC-I, CD86, ICAM1 and CD1D.

It is found in the host cell membrane. Its subcellular location is the host endoplasmic reticulum. The enzyme catalyses S-ubiquitinyl-[E2 ubiquitin-conjugating enzyme]-L-cysteine + [acceptor protein]-L-lysine = [E2 ubiquitin-conjugating enzyme]-L-cysteine + N(6)-ubiquitinyl-[acceptor protein]-L-lysine.. The protein operates within protein modification; protein ubiquitination. Functionally, membrane-bound E3 ubiquitin ligase expressed at the immediate early stage of viral reactivation to mediate polyubiquitination of various host membrane proteins related to the immune response. Promotes ubiquitination and subsequent degradation of host MHC-I, CD86, DC-SIGN and DC-SIGNR, ICAM1 and CD1D molecules, presumably to prevent lysis of infected cells by cytotoxic T-lymphocytes and NK cell. Plays a role in the down-regulation of the host stress-induced NKG2D ligands MICA, MICB and CLEC2B, which enable immune cells expressing the NKG2D receptor to recognize and annihilate infected cells prior to viral spread. Alters monocyte metabolism and proliferation by mediating rapid internalization of cellular growth factor-binding receptor tyrosine kinases from the surface leading to increased signaling. This chain is E3 ubiquitin-protein ligase MIR2 (K5), found in Homo sapiens (Human).